Consider the following 81-residue polypeptide: U-poneritoxin(01)-Om6a (81 aa).

An N-terminal signal peptide occupies residues 1–21; sequence MRRSYVLLAFAIVLIISIISA. Positions 22-43 are excised as a propeptide; sequence QVEADASSDAFADAVADAVADP. An Alanine amide modification is found at alanine 79.

It belongs to the formicidae venom precursor-01 superfamily. In terms of processing, truncated sequences of this peptide have also been found in the venom. It is possible they have been cleaved in the venom. In terms of tissue distribution, expressed by the venom gland.

It localises to the secreted. Cationic amphipathic alpha-helical peptide with antimicrobial activities against E.coli (MIC=3.1), and S.aureus (MIC=3.1 uM). Also shows histamine-releasing activity (33.6% at 10 uM). Does not have activity against S.cerevisiae. Does not show hemolytic activity, even at 50 uM. The protein is U-poneritoxin(01)-Om6a of Odontomachus monticola (Trap-jaw ant).